Reading from the N-terminus, the 287-residue chain is Immunoglobulin alpha Fc receptor (287 aa).

The first 21 residues, 1-21 (MDPKQTTLLCLVLCLGQRIQA), serve as a signal peptide directing secretion. Residues 22–227 (QEGDFPMPFI…SIHQDYTTQN (206 aa)) lie on the Extracellular side of the membrane. Ig-like C2-type domains lie at 42–107 (DGSV…IGHY) and 139–200 (GENI…YNRS). Residues C49 and C100 are joined by a disulfide bond. N-linked (GlcNAc...) asparagine glycans are attached at residues N65, N79, N141, N177, and N186. The cysteines at positions 146 and 193 are disulfide-linked. The helical transmembrane segment at 228-246 (LIRMAVAGLVLVALLAILV) threads the bilayer. Residues 247 to 287 (ENWHSHTALNKEASADVAEPSWSQQMCQPGLTFARTPSVCK) are Cytoplasmic-facing.

As to quaternary structure, associates with the Fc epsilon RI gamma 2 receptor inducing tyrosine phosphorylation of gamma 2. (Microbial infection) Interacts with Staphylococcus aureus protein SSL11. Isoform A.1, isoform A.2 and isoform A.3 are differentially expressed between blood and mucosal myeloid cells. Isoform A.1, isoform A.2 and isoform A.3 are expressed in monocytes. Isoform A.1 and isoform A.2 are expressed in alveolar macrophages; however only one isoform is expressed at alveolar macrophages surfaces.

It localises to the cell membrane. The protein localises to the secreted. In terms of biological role, binds to the Fc region of immunoglobulins alpha. Mediates several functions including cytokine production. The chain is Immunoglobulin alpha Fc receptor (FCAR) from Homo sapiens (Human).